Here is a 656-residue protein sequence, read N- to C-terminus: DNA mismatch repair protein MutL (656 aa).

Belongs to the DNA mismatch repair MutL/HexB family.

In terms of biological role, this protein is involved in the repair of mismatches in DNA. It is required for dam-dependent methyl-directed DNA mismatch repair. May act as a 'molecular matchmaker', a protein that promotes the formation of a stable complex between two or more DNA-binding proteins in an ATP-dependent manner without itself being part of a final effector complex. This is DNA mismatch repair protein MutL from Lactococcus lactis subsp. lactis (strain IL1403) (Streptococcus lactis).